The primary structure comprises 384 residues: Chaperone protein DnaJ (384 aa).

Residues 6-71 (DYYEVLGISK…TKRKTYDQFG (66 aa)) enclose the J domain. The segment at 141 to 223 (GKKMSIKVNR…CHGTGNTRKV (83 aa)) adopts a CR-type zinc-finger fold. Zn(2+) contacts are provided by Cys-154, Cys-157, Cys-171, Cys-174, Cys-197, Cys-200, Cys-211, and Cys-214. 4 CXXCXGXG motif repeats span residues 154–161 (CEECNGTG), 171–178 (CSTCNGTG), 197–204 (CSACNGTG), and 211–218 (CSKCHGTG).

The protein belongs to the DnaJ family. As to quaternary structure, homodimer. It depends on Zn(2+) as a cofactor.

The protein localises to the cytoplasm. Participates actively in the response to hyperosmotic and heat shock by preventing the aggregation of stress-denatured proteins and by disaggregating proteins, also in an autonomous, DnaK-independent fashion. Unfolded proteins bind initially to DnaJ; upon interaction with the DnaJ-bound protein, DnaK hydrolyzes its bound ATP, resulting in the formation of a stable complex. GrpE releases ADP from DnaK; ATP binding to DnaK triggers the release of the substrate protein, thus completing the reaction cycle. Several rounds of ATP-dependent interactions between DnaJ, DnaK and GrpE are required for fully efficient folding. Also involved, together with DnaK and GrpE, in the DNA replication of plasmids through activation of initiation proteins. This Clostridioides difficile (strain 630) (Peptoclostridium difficile) protein is Chaperone protein DnaJ.